A 559-amino-acid polypeptide reads, in one-letter code: Cocaine esterase (559 aa).

Positions 1–26 (MRLHRLRARLSAVACGLLLLLVRGQG) are cleaved as a signal peptide. Glutamine 27 bears the Pyrrolidone carboxylic acid mark. Cysteines 95 and 123 form a disulfide. N-linked (GlcNAc...) asparagine glycosylation is present at asparagine 111. Serine 228 functions as the Acyl-ester intermediate in the catalytic mechanism. An N-linked (GlcNAc...) asparagine glycan is attached at asparagine 276. Cysteine 280 and cysteine 291 form a disulfide bridge. Residues glutamate 345 and histidine 457 each act as charge relay system in the active site. Residues 556-559 (HTEL) carry the Prevents secretion from ER motif.

It belongs to the type-B carboxylesterase/lipase family. In terms of assembly, monomer. Post-translationally, glycosylated. Preferentially expressed in intestine with moderate expression in liver. Within the intestine, highest expression is found in small intestine with lower expression in colon and rectum.

The protein resides in the endoplasmic reticulum lumen. It catalyses the reaction cocaine + H2O = ecgonine methyl ester + benzoate + H(+). The catalysed reaction is a carboxylic ester + H2O = an alcohol + a carboxylate + H(+). The enzyme catalyses 4-methylumbelliferyl acetate + H2O = 4-methylumbelliferone + acetate + H(+). It carries out the reaction 2-(5Z,8Z,11Z,14Z-eicosatetraenoyl)-glycerol + H2O = glycerol + (5Z,8Z,11Z,14Z)-eicosatetraenoate + H(+). It catalyses the reaction prostaglandin E2 1-glyceryl ester + H2O = prostaglandin E2 + glycerol + H(+). The catalysed reaction is prostaglandin F2alpha 1-glyceryl ester + H2O = prostaglandin F2alpha + glycerol + H(+). Its function is as follows. Involved in the detoxification of xenobiotics and in the activation of ester and amide prodrugs. Shows high catalytic efficiency for hydrolysis of cocaine, 4-methylumbelliferyl acetate, heroin and 6-monoacetylmorphine. Hydrolyzes aspirin, substrates with large alcohol group and small acyl group and endogenous lipids such as triacylglycerol. Converts monoacylglycerides to free fatty acids and glycerol. Hydrolyzes of 2-arachidonoylglycerol and prostaglandins. The protein is Cocaine esterase of Homo sapiens (Human).